The primary structure comprises 143 residues: uncharacterized protein (143 aa).

This is an uncharacterized protein from Homo sapiens (Human).